Reading from the N-terminus, the 469-residue chain is UDP-glycosyltransferase 43 (469 aa).

UDP-alpha-D-glucose-binding positions include Ser280, 345-346 (WV), 363-371 (HCGWNSILE), and 385-388 (YSEQ).

The protein belongs to the UDP-glycosyltransferase family.

Inhibited by Cu(2+) or Zn(2+). In terms of biological role, glycosyltransferase that catalyzes the C-glucosylation of daidzein to puerarin. Shows activity with the isoflavones daidzein and genistein, but has no activity towards flavonoids such as 2-hydroxynaringenin. Can use UDP-glucose, but not UDP-galactose or UDP-glucuronic acid as sugar donor. Does not require bivalent cations for activity. This is UDP-glycosyltransferase 43 from Pueraria montana var. lobata (Kudzu vine).